Reading from the N-terminus, the 478-residue chain is Chromosomal replication initiator protein DnaA (478 aa).

Residues 1 to 95 (MNKTLNPQEV…DVLEKEITEE (95 aa)) are domain I, interacts with DnaA modulators. Residues 96-141 (INDLVQSMEEEDFALIDHTKPVIPNFFDQNTRVNFGGGPNNHHPTT) form a domain II region. Residues 142-358 (GVNPRFTFDN…GALLRIFALA (217 aa)) are domain III, AAA+ region. Residues glycine 186, glycine 188, lysine 189, and threonine 190 each coordinate ATP. Residues 359-478 (SFNKEEINMT…YKLTQFILRR (120 aa)) are domain IV, binds dsDNA.

The protein belongs to the DnaA family. In terms of assembly, oligomerizes as a right-handed, spiral filament on DNA at oriC.

The protein localises to the cytoplasm. Its function is as follows. Plays an essential role in the initiation and regulation of chromosomal replication. ATP-DnaA binds to the origin of replication (oriC) to initiate formation of the DNA replication initiation complex once per cell cycle. Binds the DnaA box (a 9 base pair repeat at the origin) and separates the double-stranded (ds)DNA. Forms a right-handed helical filament on oriC DNA; dsDNA binds to the exterior of the filament while single-stranded (ss)DNA is stabiized in the filament's interior. The ATP-DnaA-oriC complex binds and stabilizes one strand of the AT-rich DNA unwinding element (DUE), permitting loading of DNA polymerase. After initiation quickly degrades to an ADP-DnaA complex that is not apt for DNA replication. Binds acidic phospholipids. In Tropheryma whipplei (strain TW08/27) (Whipple's bacillus), this protein is Chromosomal replication initiator protein DnaA.